Consider the following 133-residue polypeptide: Large ribosomal subunit protein uL22 (133 aa).

This sequence belongs to the universal ribosomal protein uL22 family. As to quaternary structure, part of the 50S ribosomal subunit.

This protein binds specifically to 23S rRNA; its binding is stimulated by other ribosomal proteins, e.g. L4, L17, and L20. It is important during the early stages of 50S assembly. It makes multiple contacts with different domains of the 23S rRNA in the assembled 50S subunit and ribosome. In terms of biological role, the globular domain of the protein is located near the polypeptide exit tunnel on the outside of the subunit, while an extended beta-hairpin is found that lines the wall of the exit tunnel in the center of the 70S ribosome. This Aquifex pyrophilus protein is Large ribosomal subunit protein uL22.